Reading from the N-terminus, the 395-residue chain is Vomeronasal type-1 receptor 2 (395 aa).

Residues 12-32 traverse the membrane as a helical segment; it reads LYPINISAAWHLGPLPVSCFV. Topologically, residues 33–51 are extracellular; the sequence is SNKYQCSLAFGATTGLRVL. Residues 52–72 form a helical membrane-spanning segment; the sequence is VVVVPQTQLSFLSSLCLVSLF. At 73 to 93 the chain is on the cytoplasmic side; it reads LHSLVSAHGEKPTKPVGLDPT. Residues 94–114 traverse the membrane as a helical segment; sequence LFQVVVGILGNFSLLYYYMFL. Over 115–170 the chain is Extracellular; the sequence is YFRGYKPRSTDLILRHLTVADSLVILSKRIPETMATFGLKHFDNYFGCKFLLYAHR. A helical membrane pass occupies residues 171-191; it reads VGRGVSIGSTCLLSVFQVITI. Topologically, residues 192–208 are cytoplasmic; sequence NPRNSRWAEMKVKAPTY. A helical transmembrane segment spans residues 209–229; sequence IGLSNILCWAFHMLVNAIFPI. Over 230–267 the chain is Extracellular; the sequence is YTTGKWSNNNITKKGDLGYCSAPLSDEVTKSVYAALTS. A glycan (N-linked (GlcNAc...) asparagine) is linked at Asn-239. The helical transmembrane segment at 268–288 threads the bilayer; it reads FHDVLCLGLMLWASSSIVLVL. Over 289-316 the chain is Cytoplasmic; the sequence is YRHKQQVQHICRNNLYPNSSPGNRAIQS. The chain crosses the membrane as a helical span at residues 317-337; it reads ILALVSTFALCYALSFITYVY. The Extracellular portion of the chain corresponds to 338 to 346; that stretch reads LALFDNSSW. N-linked (GlcNAc...) asparagine glycosylation occurs at Asn-343. The chain crosses the membrane as a helical span at residues 347–367; the sequence is WLVNTAALIIACFPTISPFVL. Topologically, residues 368 to 395 are cytoplasmic; it reads MCRDPSRSRLCSICCRRNRRFFHDFRKM.

This sequence belongs to the G-protein coupled receptor 1 family.

Its subcellular location is the cell membrane. Functionally, putative pheromone receptor. This is Vomeronasal type-1 receptor 2 (VN1R2) from Homo sapiens (Human).